The following is a 143-amino-acid chain: Hemoglobin subunit alpha (143 aa).

The residue at position 1 (serine 1) is an N-acetylserine. The Globin domain maps to 1–143 (SLSATDKARV…LALALSEKYR (143 aa)). Residue histidine 60 participates in O2 binding. Histidine 89 serves as a coordination point for heme b.

The protein belongs to the globin family. In terms of assembly, heterotetramer of two alpha chains and two beta chains. Red blood cells.

Involved in oxygen transport from gills to the various peripheral tissues. The protein is Hemoglobin subunit alpha (hba) of Leiostomus xanthurus (Spot).